Consider the following 195-residue polypeptide: HTH-type transcriptional regulator BetI (195 aa).

Positions 8–68 (PIRRRQLIDA…ATMRDITSQL (61 aa)) constitute an HTH tetR-type domain. The H-T-H motif DNA-binding region spans 31–50 (TIAQIARRAGVSTGIISHYF).

It participates in amine and polyamine biosynthesis; betaine biosynthesis via choline pathway [regulation]. Functionally, repressor involved in the biosynthesis of the osmoprotectant glycine betaine. It represses transcription of the choline transporter BetT and the genes of BetAB involved in the synthesis of glycine betaine. This is HTH-type transcriptional regulator BetI from Klebsiella pneumoniae (strain 342).